The following is a 511-amino-acid chain: Coatomer subunit delta (511 aa).

Over residues 168 to 177 the composition is skewed to basic and acidic residues; that stretch reads QARRDAERQG. Residues 168–196 are disordered; it reads QARRDAERQGKKAPGFGGFGSSTVSGGST. A Phosphoserine modification is found at Ser-223. Lys-233 and Lys-241 each carry N6-acetyllysine. Ser-244 carries the phosphoserine modification. Residues 271 to 511 form the MHD domain; the sequence is MESVHMKIEE…TFLVDKYEIL (241 aa). Lys-309 and Lys-351 each carry N6-acetyllysine. Residue Ser-493 is modified to Phosphoserine.

Belongs to the adaptor complexes medium subunit family. Delta-COP subfamily. Oligomeric complex that consists of at least the alpha, beta, beta', gamma, delta, epsilon and zeta subunits. Ubiquitously expressed.

The protein localises to the cytoplasm. The protein resides in the golgi apparatus membrane. It is found in the cytoplasmic vesicle. It localises to the COPI-coated vesicle membrane. Its function is as follows. The coatomer is a cytosolic protein complex that binds to dilysine motifs and reversibly associates with Golgi non-clathrin-coated vesicles, which further mediate biosynthetic protein transport from the ER, via the Golgi up to the trans Golgi network. Coatomer complex is required for budding from Golgi membranes, and is essential for the retrograde Golgi-to-ER transport of dilysine-tagged proteins. In mammals, the coatomer can only be recruited by membranes associated to ADP-ribosylation factors (ARFs), which are small GTP-binding proteins; the complex also influences the Golgi structural integrity, as well as the processing, activity, and endocytic recycling of LDL receptors. The chain is Coatomer subunit delta (ARCN1) from Bos taurus (Bovine).